A 543-amino-acid chain; its full sequence is Chaperonin GroEL (543 aa).

ATP is bound by residues 29 to 32 (TLGP), lysine 50, 86 to 90 (DGTTT), glycine 415, and aspartate 495.

Belongs to the chaperonin (HSP60) family. In terms of assembly, forms a cylinder of 14 subunits composed of two heptameric rings stacked back-to-back. Interacts with the co-chaperonin GroES.

The protein resides in the cytoplasm. It catalyses the reaction ATP + H2O + a folded polypeptide = ADP + phosphate + an unfolded polypeptide.. Functionally, together with its co-chaperonin GroES, plays an essential role in assisting protein folding. The GroEL-GroES system forms a nano-cage that allows encapsulation of the non-native substrate proteins and provides a physical environment optimized to promote and accelerate protein folding. The protein is Chaperonin GroEL of Flavobacterium johnsoniae (strain ATCC 17061 / DSM 2064 / JCM 8514 / BCRC 14874 / CCUG 350202 / NBRC 14942 / NCIMB 11054 / UW101) (Cytophaga johnsonae).